Consider the following 381-residue polypeptide: Estradiol 17-beta-dehydrogenase 2 (381 aa).

Residues 4–24 (FSSESAWLCLTATAVLGGMLL) form a helical; Signal-anchor for type II membrane protein membrane-spanning segment. 83–112 (QKAVLVTGADSGFGHALAKHLDKLGFTVFA) contributes to the NAD(+) binding site. Substrate is bound at residue serine 220. Tyrosine 233 (proton acceptor) is an active-site residue.

This sequence belongs to the short-chain dehydrogenases/reductases (SDR) family. As to quaternary structure, homodimer. As to expression, highly expressed in the placenta, and in the small intestine, and liver.

It is found in the endoplasmic reticulum membrane. It carries out the reaction 17beta-estradiol + NAD(+) = estrone + NADH + H(+). The catalysed reaction is testosterone + NAD(+) = androst-4-ene-3,17-dione + NADH + H(+). It catalyses the reaction 17beta-hydroxy-5alpha-androstan-3-one + NAD(+) = 5alpha-androstan-3,17-dione + NADH + H(+). The enzyme catalyses (20S)-hydroxypregn-4-en-3-one + NAD(+) = progesterone + NADH + H(+). Functionally, catalyzes the NAD-dependent oxidation of highly active 17beta-hydroxysteroids, such as estradiol (E2), testosterone (T), and dihydrotestosterone (DHT), to their less active forms and thus regulates the biological potency of these steroids. Oxidizes estradiol to estrone, testosterone to androstenedione, and dihydrotestosterone to 5alpha-androstan-3,17-dione. Also has 20-alpha-HSD activity. The polypeptide is Estradiol 17-beta-dehydrogenase 2 (Hsd17b2) (Rattus norvegicus (Rat)).